The sequence spans 318 residues: Methionyl-tRNA formyltransferase (318 aa).

Position 115-118 (115-118 (SLLP)) interacts with (6S)-5,6,7,8-tetrahydrofolate.

It belongs to the Fmt family.

The catalysed reaction is L-methionyl-tRNA(fMet) + (6R)-10-formyltetrahydrofolate = N-formyl-L-methionyl-tRNA(fMet) + (6S)-5,6,7,8-tetrahydrofolate + H(+). In terms of biological role, attaches a formyl group to the free amino group of methionyl-tRNA(fMet). The formyl group appears to play a dual role in the initiator identity of N-formylmethionyl-tRNA by promoting its recognition by IF2 and preventing the misappropriation of this tRNA by the elongation apparatus. The protein is Methionyl-tRNA formyltransferase of Deinococcus radiodurans (strain ATCC 13939 / DSM 20539 / JCM 16871 / CCUG 27074 / LMG 4051 / NBRC 15346 / NCIMB 9279 / VKM B-1422 / R1).